Reading from the N-terminus, the 511-residue chain is MKNSDIIVLDFGSQYTQLIARRLREQGVYTEILPFNAKISQIKEKNPKGLILSGGPASVYAKDAYFPNDEIFNLNLPILGICYGMQLIAYHFGASVTPTNKKEYGKSNLKFVSENALLKDTKDGQIVWMSHSDKVENLPDGFKTIAVSENSPFCAFCDEKRKIYALQFHPEVAHSECGDKILKNFAKYICDCESTWNMGNFAKIKCEEIKKQVGKDRVLCAVSGGVDSSVVAALLAHCIKENLIVVFVDNGLLRTDEAKQVEQTFKLKLGVELISIDASELFLGRLKGITDPEEKRKIIGKTFIEVFEREAKKHQNVKYLAQGTLYTDIIESSVVGSSKTIKSHHNVGGLPKDMKFKLIEPLKEIFKDEVRKLGTELGLSPDLVYRHPFPGPGLAIRILGEITPEKLCVLRKADVILRDELKSSGWYNKTWQAFCVLLNVNSVGVMGDNRTYENAVCIRVVDASDGMTASFSRLPYDLLENISRRIINEVDGINRVVYDISSKPPATIEWE.

The Glutamine amidotransferase type-1 domain maps to 5–195 (DIIVLDFGSQ…AKYICDCEST (191 aa)). C82 serves as the catalytic Nucleophile. Active-site residues include H169 and E171. In terms of domain architecture, GMPS ATP-PPase spans 196–386 (WNMGNFAKIK…LGLSPDLVYR (191 aa)). 223–229 (SGGVDSS) provides a ligand contact to ATP.

In terms of assembly, homodimer.

The enzyme catalyses XMP + L-glutamine + ATP + H2O = GMP + L-glutamate + AMP + diphosphate + 2 H(+). It participates in purine metabolism; GMP biosynthesis; GMP from XMP (L-Gln route): step 1/1. Catalyzes the synthesis of GMP from XMP. This Campylobacter hominis (strain ATCC BAA-381 / DSM 21671 / CCUG 45161 / LMG 19568 / NCTC 13146 / CH001A) protein is GMP synthase [glutamine-hydrolyzing].